A 284-amino-acid chain; its full sequence is 4-diphosphocytidyl-2-C-methyl-D-erythritol kinase (284 aa).

The active site involves K17. P100–S110 provides a ligand contact to ATP. D142 is a catalytic residue.

Belongs to the GHMP kinase family. IspE subfamily.

The catalysed reaction is 4-CDP-2-C-methyl-D-erythritol + ATP = 4-CDP-2-C-methyl-D-erythritol 2-phosphate + ADP + H(+). It functions in the pathway isoprenoid biosynthesis; isopentenyl diphosphate biosynthesis via DXP pathway; isopentenyl diphosphate from 1-deoxy-D-xylulose 5-phosphate: step 3/6. Functionally, catalyzes the phosphorylation of the position 2 hydroxy group of 4-diphosphocytidyl-2C-methyl-D-erythritol. In Aromatoleum aromaticum (strain DSM 19018 / LMG 30748 / EbN1) (Azoarcus sp. (strain EbN1)), this protein is 4-diphosphocytidyl-2-C-methyl-D-erythritol kinase.